Here is a 511-residue protein sequence, read N- to C-terminus: Bifunctional purine biosynthesis protein PurH (511 aa).

The region spanning 1-145 (MKKRALVSVS…KNHKFVSVIV (145 aa)) is the MGS-like domain.

This sequence belongs to the PurH family.

It carries out the reaction (6R)-10-formyltetrahydrofolate + 5-amino-1-(5-phospho-beta-D-ribosyl)imidazole-4-carboxamide = 5-formamido-1-(5-phospho-D-ribosyl)imidazole-4-carboxamide + (6S)-5,6,7,8-tetrahydrofolate. It catalyses the reaction IMP + H2O = 5-formamido-1-(5-phospho-D-ribosyl)imidazole-4-carboxamide. Its pathway is purine metabolism; IMP biosynthesis via de novo pathway; 5-formamido-1-(5-phospho-D-ribosyl)imidazole-4-carboxamide from 5-amino-1-(5-phospho-D-ribosyl)imidazole-4-carboxamide (10-formyl THF route): step 1/1. It functions in the pathway purine metabolism; IMP biosynthesis via de novo pathway; IMP from 5-formamido-1-(5-phospho-D-ribosyl)imidazole-4-carboxamide: step 1/1. This Bacillus cereus (strain ZK / E33L) protein is Bifunctional purine biosynthesis protein PurH.